Consider the following 572-residue polypeptide: uncharacterized protein (572 aa).

The tract at residues 13–45 (ALIAKPKGKTVSGDGADPKKRGRPKKNATEPAV) is disordered. A coiled-coil region spans residues 177 to 204 (VLTKEMEEKLEALDRDMRTAEETKVSIA).

This is an uncharacterized protein from Dryophytes versicolor (chameleon treefrog).